We begin with the raw amino-acid sequence, 163 residues long: Protein VASCULATURE COMPLEXITY AND CONNECTIVITY (163 aa).

An N-terminal signal peptide occupies residues 1 to 27 (MTKIGGILVCLVIVGLDVAAAILGIQA). 3 helical membrane-spanning segments follow: residues 54-74 (LGLG…LVGG), 95-115 (MACL…IVIG), and 133-153 (FLSI…AYYV).

It belongs to the DESIGUAL family. Interacts with OPS. As to expression, expressed in vascular cells, mostly in hypocotyls, and, to a lower extent, in seedlings, roots, flowers, siliques, developing leaves and inflorescences, but barely in mature leaves and seeds. High levels in leaf primordia.

The protein resides in the endoplasmic reticulum membrane. Its function is as follows. Required, together with OPS, for embryo provasculature development and cotyledon vascular complexity and connectivity. Necessary, partially redundantly with DEAL2 and DEAL3, to ensure bilateral symmetry development and early leaf margin patterning, probably via the regulation of auxin and CUC2 distribution. Regulates cell proliferation but not cell expansion. This is Protein VASCULATURE COMPLEXITY AND CONNECTIVITY from Arabidopsis thaliana (Mouse-ear cress).